We begin with the raw amino-acid sequence, 268 residues long: MIAAFQSPGATLELGFITLRWYGLLIAVAVFIGIWLSQRLARQRQIDPEQIADLSIWLVVAAIPAARLYYVAFNWGFYQKHLDQVVQIWKGGIAIHGAILGGIVAMAIFTYVQRLSFWQVADVVAPSLILGQAIGRWGNFFNSEAFGAPTDLPWKLYIPVPQRPPELINTAYYHPTFLYESLWNVGVFLLLLWLFRQPRYQKPGTLLMVYAIAYSLGRFWIEGLRMDSLMLGPLRIAQVVSLVAIALGSWGLFRLYYQGKPLPDWQTP.

3 helical membrane-spanning segments follow: residues 16-36 (FITL…GIWL), 56-76 (IWLV…FNWG), and 92-112 (GIAI…FTYV). Arg-136 lines the a 1,2-diacyl-sn-glycero-3-phospho-(1'-sn-glycerol) pocket. 3 consecutive transmembrane segments (helical) span residues 175–195 (PTFL…LWLF), 204–224 (GTLL…IEGL), and 236–256 (IAQV…FRLY).

Belongs to the Lgt family.

It is found in the cell inner membrane. The enzyme catalyses L-cysteinyl-[prolipoprotein] + a 1,2-diacyl-sn-glycero-3-phospho-(1'-sn-glycerol) = an S-1,2-diacyl-sn-glyceryl-L-cysteinyl-[prolipoprotein] + sn-glycerol 1-phosphate + H(+). It participates in protein modification; lipoprotein biosynthesis (diacylglyceryl transfer). Functionally, catalyzes the transfer of the diacylglyceryl group from phosphatidylglycerol to the sulfhydryl group of the N-terminal cysteine of a prolipoprotein, the first step in the formation of mature lipoproteins. The polypeptide is Phosphatidylglycerol--prolipoprotein diacylglyceryl transferase (Thermosynechococcus vestitus (strain NIES-2133 / IAM M-273 / BP-1)).